A 54-amino-acid polypeptide reads, in one-letter code: Large ribosomal subunit protein bL33 (54 aa).

It belongs to the bacterial ribosomal protein bL33 family.

The chain is Large ribosomal subunit protein bL33 from Elusimicrobium minutum (strain Pei191).